The following is a 314-amino-acid chain: Acetaldehyde dehydrogenase 4 (314 aa).

15 to 18 (SGNI) is an NAD(+) binding site. Catalysis depends on Cys-133, which acts as the Acyl-thioester intermediate. Residues 164 to 172 (SAGPGTRAN) and Asn-292 each bind NAD(+).

The protein belongs to the acetaldehyde dehydrogenase family.

The catalysed reaction is acetaldehyde + NAD(+) + CoA = acetyl-CoA + NADH + H(+). The protein is Acetaldehyde dehydrogenase 4 of Burkholderia lata (strain ATCC 17760 / DSM 23089 / LMG 22485 / NCIMB 9086 / R18194 / 383).